A 150-amino-acid chain; its full sequence is Viral late gene transcription factor 2 (150 aa).

Belongs to the chordopoxvirinae VLTF-2 family. Interacts with itself. Interacts with the late transcription factors VLTF-1.

Its function is as follows. Acts with RNA polymerase to initiate transcription from late gene promoters. The polypeptide is Viral late gene transcription factor 2 (VLTF2) (Homo sapiens (Human)).